Reading from the N-terminus, the 307-residue chain is Porphobilinogen deaminase (307 aa).

At Cys-239 the chain carries S-(dipyrrolylmethanemethyl)cysteine.

The protein belongs to the HMBS family. Monomer. Dipyrromethane serves as cofactor.

It carries out the reaction 4 porphobilinogen + H2O = hydroxymethylbilane + 4 NH4(+). It participates in porphyrin-containing compound metabolism; protoporphyrin-IX biosynthesis; coproporphyrinogen-III from 5-aminolevulinate: step 2/4. Tetrapolymerization of the monopyrrole PBG into the hydroxymethylbilane pre-uroporphyrinogen in several discrete steps. This chain is Porphobilinogen deaminase (hemC), found in Campylobacter jejuni subsp. jejuni serotype O:2 (strain ATCC 700819 / NCTC 11168).